Reading from the N-terminus, the 413-residue chain is Inactive squalene synthase 2 (413 aa).

Position 2 is an N-acetylglycine (glycine 2). The next 2 helical transmembrane spans lie at 283-303 (AIFQSCAIPQIVAIGTLALCY) and 390-410 (AIFVVMFVLLLAIVVVYLKAN).

It belongs to the phytoene/squalene synthase family. The cofactor is Mg(2+). Mn(2+) is required as a cofactor. As to expression, mostly expressed in hypocotyls, leaves and cotyledons, and, to a lower extent, in stems.

The protein resides in the endoplasmic reticulum membrane. The polypeptide is Inactive squalene synthase 2 (Arabidopsis thaliana (Mouse-ear cress)).